A 670-amino-acid chain; its full sequence is DNA mismatch repair protein MutL (670 aa).

Residues 363–451 are disordered; it reads SFDRGRPLSR…RAAGGPASTH (89 aa). Over residues 379–389 the composition is skewed to basic and acidic residues; the sequence is ERWRERHRPDA.

This sequence belongs to the DNA mismatch repair MutL/HexB family.

In terms of biological role, this protein is involved in the repair of mismatches in DNA. It is required for dam-dependent methyl-directed DNA mismatch repair. May act as a 'molecular matchmaker', a protein that promotes the formation of a stable complex between two or more DNA-binding proteins in an ATP-dependent manner without itself being part of a final effector complex. The polypeptide is DNA mismatch repair protein MutL (Syntrophobacter fumaroxidans (strain DSM 10017 / MPOB)).